We begin with the raw amino-acid sequence, 76 residues long: Serine palmitoyltransferase small subunit B (76 aa).

The Cytoplasmic segment spans residues 1–11 (MDFKRVKEYFA). Residues 12-29 (WLYYQYQIITCCAVMEPW) traverse the membrane as a helical segment. Over 30–36 (EQSMLNT) the chain is Lumenal. A helical transmembrane segment spans residues 37-57 (IILTIVAMVVYTAYVFIPIHI). Topologically, residues 58–76 (RLAWEFFSKICGYDSSISN) are cytoplasmic.

It belongs to the SPTSS family. SPTSSB subfamily. Component of the serine palmitoyltransferase (SPT) complex, which is composed of SPTLC1, SPTLC2 or SPTLC3 and SPTSSA or SPTSSB. The heterodimer consisting of SPTLC1 and SPTLC2/SPTLC3 forms the catalytic core of the enzyme, while SPTSSA or SPTSSB subunits determine substrate specificity. SPT also interacts with ORMDL proteins, especially ORMDL3, which negatively regulate SPT activity in the presence of ceramides. As to expression, expression is strong in hypogonadal (hpg) mouse prostate, weak in mature castrated mouse prostate and absent in normal intact or androgen-replaced hpg mouse prostates.

It is found in the endoplasmic reticulum membrane. It functions in the pathway lipid metabolism; sphingolipid metabolism. Component of the serine palmitoyltransferase multisubunit enzyme (SPT) that catalyzes the initial and rate-limiting step in sphingolipid biosynthesis by condensing L-serine and activated acyl-CoA (most commonly palmitoyl-CoA) to form long-chain bases. The SPT complex is composed of SPTLC1, SPTLC2 or SPTLC3 and SPTSSA or SPTSSB. Within this complex, the heterodimer consisting of SPTLC1 and SPTLC2/SPTLC3 forms the catalytic core. Within the SPT complex, SPTSSB stimulates the catalytic activity and plays a role in substrate specificity. SPT complexes with this subunit showing a preference for longer acyl-CoAs. The SPTLC1-SPTLC2-SPTSSB complex shows a strong preference for C18-CoA substrate, while the SPTLC1-SPTLC3-SPTSSB isozyme displays an ability to use a broader range of acyl-CoAs, without apparent preference. This Mus musculus (Mouse) protein is Serine palmitoyltransferase small subunit B (Sptssb).